A 217-amino-acid polypeptide reads, in one-letter code: Probable transaldolase (217 aa).

The active-site Schiff-base intermediate with substrate is the Lys-83.

This sequence belongs to the transaldolase family. Type 3B subfamily.

It is found in the cytoplasm. It catalyses the reaction D-sedoheptulose 7-phosphate + D-glyceraldehyde 3-phosphate = D-erythrose 4-phosphate + beta-D-fructose 6-phosphate. The protein operates within carbohydrate degradation; pentose phosphate pathway; D-glyceraldehyde 3-phosphate and beta-D-fructose 6-phosphate from D-ribose 5-phosphate and D-xylulose 5-phosphate (non-oxidative stage): step 2/3. Its function is as follows. Transaldolase is important for the balance of metabolites in the pentose-phosphate pathway. This Coprothermobacter proteolyticus (strain ATCC 35245 / DSM 5265 / OCM 4 / BT) protein is Probable transaldolase.